The following is a 195-amino-acid chain: Glycerol-3-phosphate acyltransferase (195 aa).

The next 6 membrane-spanning stretches (helical) occupy residues 4–24 (GLIL…GLLL), 53–73 (GLAA…VLIA), 80–100 (TAVW…WLGF), 110–130 (LGVL…IWLA), 133–153 (FLFR…PIAL), and 154–174 (YFLS…IVFI).

The protein belongs to the PlsY family. As to quaternary structure, probably interacts with PlsX.

The protein resides in the cell inner membrane. The catalysed reaction is an acyl phosphate + sn-glycerol 3-phosphate = a 1-acyl-sn-glycero-3-phosphate + phosphate. The protein operates within lipid metabolism; phospholipid metabolism. In terms of biological role, catalyzes the transfer of an acyl group from acyl-phosphate (acyl-PO(4)) to glycerol-3-phosphate (G3P) to form lysophosphatidic acid (LPA). This enzyme utilizes acyl-phosphate as fatty acyl donor, but not acyl-CoA or acyl-ACP. The sequence is that of Glycerol-3-phosphate acyltransferase from Mesorhizobium japonicum (strain LMG 29417 / CECT 9101 / MAFF 303099) (Mesorhizobium loti (strain MAFF 303099)).